The sequence spans 206 residues: Small ribosomal subunit protein eS1 (206 aa).

The protein belongs to the eukaryotic ribosomal protein eS1 family.

In Halobacterium salinarum (strain ATCC 29341 / DSM 671 / R1), this protein is Small ribosomal subunit protein eS1.